The chain runs to 424 residues: UDP-galactose transporter homolog 1 (424 aa).

A run of 6 helical transmembrane segments spans residues 57–77 (LWQL…WGVL), 107–127 (IVLN…YLYF), 144–164 (IIFP…FGYA), 173–193 (TFIL…LTIF), 197–217 (YPLY…TFTL), and 234–254 (TSGS…LDGL). N256 carries N-linked (GlcNAc...) asparagine glycosylation. Transmembrane regions (helical) follow at residues 293–313 (LLIM…PVPI), 337–357 (SVLG…YTLS), and 380–400 (VFWF…LVFG).

Belongs to the nucleotide-sugar transporter family. SLC35B subfamily.

The protein localises to the endoplasmic reticulum membrane. In terms of biological role, may be involved in specific transport of UDP-Gal from the cytosol to the Golgi lumen. Involved in the maintenance of optimal conditions for the folding of secretory pathway proteins in the endoplasmic reticulum. The polypeptide is UDP-galactose transporter homolog 1 (hut1) (Emericella nidulans (strain FGSC A4 / ATCC 38163 / CBS 112.46 / NRRL 194 / M139) (Aspergillus nidulans)).